Here is a 596-residue protein sequence, read N- to C-terminus: MAGRRVNVNVGVLGHIDSGKTALARALSTTASTAAFDKQPQSRERGITLDLGFSCFSVPLPARLRSSLPEFQAAPEAEPEPGEPLLQVTLVDCPGHASLIRTIIGGAQIIDLMMLVIDVTKGMQTQSAECLVIGQIACQKLVVVLNKIDLLPEGKRQAAIDKMTKKMQKTLENTKFRGAPIIPVAAKPGGPEAPETEAPQGIPELIELLTSQISIPTRDPSGPFLMSVDHCFSIKGQGTVMTGTILSGSISLGDSVEIPALKVVKKVKSMQMFHMPITSAMQGDRLGICVTQFDPKLLERGLVCAPESLHTVHAALISVEKIPYFRGPLQTKAKFHITVGHETVMGRLMFFSPAPDNFDQEPILDSFNFSQEYLFQEQYLSKDLTPAVTDNDEADKKAGQATEGHCPRQQWALVEFEKPVTCPRLCLVIGSRLDADIHTNTCRLAFHGILLHGLEDRNYADSFLPRLKVYKLKHKHGLVERAMDDYSVIGRSLFKKETNIQLFVGLKVHLSTGELGIIDSAFGQSGKFKIHIPGGLSPESKKILTPALKKRARAGRGEATRQEESAERSEPSQHVVLSLTFKRYVFDTHKRMVQSP.

Residues Arg5–Thr217 enclose the tr-type G domain. Residues Gly14–Thr21 are G1. Gly19, Thr21, and Ala22 together coordinate GDP. The GTP site is built by Gly19, Thr21, and Ala22. Mg(2+) is bound at residue Thr21. Residues Gly46–Asp50 form a G2 region. The Mg(2+) site is built by Thr48 and Asp92. Residues Asp92–Gly95 are G3. The segment at Asn146–Asp149 is G4. Asp149 and Lys187 together coordinate GDP. Asp149 and Lys187 together coordinate GTP. The segment at Ala185–Lys187 is G5. Ser537 carries the phosphoserine modification. Thr545 is subject to Phosphothreonine. The short motif at Ala547–Arg553 is the Nuclear localization signal element. Positions Leu548–Gln573 are disordered. The segment covering Gly555–Pro571 has biased composition (basic and acidic residues). Residue Arg556 is modified to Omega-N-methylarginine.

The protein belongs to the TRAFAC class translation factor GTPase superfamily. Classic translation factor GTPase family. SelB subfamily. Mg(2+) is required as a cofactor. Mn(2+) serves as cofactor.

It is found in the cytoplasm. It localises to the nucleus. It catalyses the reaction GTP + H2O = GDP + phosphate + H(+). In terms of biological role, translation factor required for the incorporation of the rare amino acid selenocysteine encoded by UGA codons. Replaces the eRF1-eRF3-GTP ternary complex for the insertion of selenocysteine directed by the UGA codon. Insertion of selenocysteine at UGA codons is mediated by SECISBP2 and EEFSEC: SECISBP2 (1) specifically binds the SECIS sequence once the 80S ribosome encounters an in-frame UGA codon and (2) contacts the RPS27A/eS31 of the 40S ribosome before ribosome stalling. (3) GTP-bound EEFSEC then delivers selenocysteinyl-tRNA(Sec) to the 80S ribosome and adopts a preaccommodated state conformation. (4) After GTP hydrolysis, EEFSEC dissociates from the assembly, selenocysteinyl-tRNA(Sec) accommodates, and peptide bond synthesis and selenoprotein elongation occur. This chain is Selenocysteine-specific elongation factor, found in Homo sapiens (Human).